The following is a 105-amino-acid chain: Large ribosomal subunit protein uL24 (105 aa).

Belongs to the universal ribosomal protein uL24 family. In terms of assembly, part of the 50S ribosomal subunit.

Functionally, one of two assembly initiator proteins, it binds directly to the 5'-end of the 23S rRNA, where it nucleates assembly of the 50S subunit. One of the proteins that surrounds the polypeptide exit tunnel on the outside of the subunit. The chain is Large ribosomal subunit protein uL24 from Methylococcus capsulatus (strain ATCC 33009 / NCIMB 11132 / Bath).